The chain runs to 279 residues: Elongation factor Ts (279 aa).

Residues 80-83 (TDFV) are involved in Mg(2+) ion dislocation from EF-Tu.

Belongs to the EF-Ts family.

The protein resides in the cytoplasm. In terms of biological role, associates with the EF-Tu.GDP complex and induces the exchange of GDP to GTP. It remains bound to the aminoacyl-tRNA.EF-Tu.GTP complex up to the GTP hydrolysis stage on the ribosome. This chain is Elongation factor Ts, found in Borreliella burgdorferi (strain ZS7) (Borrelia burgdorferi).